We begin with the raw amino-acid sequence, 1086 residues long: Phosphinothricin tripeptide synthetase PhsC (1086 aa).

Residues 22–43 (RLRAAAAPGPDPAIPRRPDDDG) form a disordered region. A condensation region spans residues 45 to 484 (VPLSFAQHRL…LAALPVLTRD (440 aa)). The segment at 510–901 (LEDSARRHPD…GRTDHQVKLR (392 aa)) is adenylation. Residues 983–1007 (GKLDREALPDPLAQSGDTAGNRPPL) form a disordered region. The region spanning 1006–1081 (PLLDPVEERI…GLARSVSAER (76 aa)) is the Carrier domain. S1041 carries the post-translational modification O-(pantetheine 4'-phosphoryl)serine.

The protein belongs to the NRP synthetase family. Pantetheine 4'-phosphate is required as a cofactor.

The enzyme catalyses holo-[peptidyl-carrier protein] + L-alanine + ATP = L-alanyl-[peptidyl-carrier protein] + AMP + diphosphate. The protein operates within secondary metabolite biosynthesis; bialaphos biosynthesis. In terms of biological role, involved in the biosynthesis of phosphinothricin tripeptide (PTT), also known as bialaphos (BA), a natural-product antibiotic and potent herbicide. Adenylates L-alanine and loads it onto a peptidyl carrier domain via a thioester linkage to the phosphopanthetheine moiety. Shows weaker activity with aminobutyric acid and L-serine. In Streptomyces viridochromogenes (strain DSM 40736 / JCM 4977 / BCRC 1201 / Tue 494), this protein is Phosphinothricin tripeptide synthetase PhsC.